A 559-amino-acid polypeptide reads, in one-letter code: Oxygen-dependent choline dehydrogenase (559 aa).

4–33 (DYIIIGAGSAGNVLATRLTEESDVSVLLLE) provides a ligand contact to FAD. The tract at residues 182–201 (EGFGPMDRTVTPKGRRASTA) is disordered. His-471 acts as the Proton acceptor in catalysis.

The protein belongs to the GMC oxidoreductase family. The cofactor is FAD.

The catalysed reaction is choline + A = betaine aldehyde + AH2. It catalyses the reaction betaine aldehyde + NAD(+) + H2O = glycine betaine + NADH + 2 H(+). It functions in the pathway amine and polyamine biosynthesis; betaine biosynthesis via choline pathway; betaine aldehyde from choline (cytochrome c reductase route): step 1/1. Its function is as follows. Involved in the biosynthesis of the osmoprotectant glycine betaine. Catalyzes the oxidation of choline to betaine aldehyde and betaine aldehyde to glycine betaine at the same rate. In Pectobacterium carotovorum subsp. carotovorum (strain PC1), this protein is Oxygen-dependent choline dehydrogenase.